Here is a 161-residue protein sequence, read N- to C-terminus: MTKKSASSNNKVVATNRKARHNYTILDTYEAGIVLMGTEVKSLREGQASLADAFATVDDGEIWLRNVHIAEYHHGTWTNHAPRRNRKLLLHRKQIDNLIGKIRDGNLTLVPLSIYFTDGKVKVELALARGKQAHDKRQDLARRDAQREVIRELGRRAKGKI.

This sequence belongs to the SmpB family.

Its subcellular location is the cytoplasm. Its function is as follows. Required for rescue of stalled ribosomes mediated by trans-translation. Binds to transfer-messenger RNA (tmRNA), required for stable association of tmRNA with ribosomes. tmRNA and SmpB together mimic tRNA shape, replacing the anticodon stem-loop with SmpB. tmRNA is encoded by the ssrA gene; the 2 termini fold to resemble tRNA(Ala) and it encodes a 'tag peptide', a short internal open reading frame. During trans-translation Ala-aminoacylated tmRNA acts like a tRNA, entering the A-site of stalled ribosomes, displacing the stalled mRNA. The ribosome then switches to translate the ORF on the tmRNA; the nascent peptide is terminated with the 'tag peptide' encoded by the tmRNA and targeted for degradation. The ribosome is freed to recommence translation, which seems to be the essential function of trans-translation. This chain is SsrA-binding protein, found in Mycolicibacterium smegmatis (strain ATCC 700084 / mc(2)155) (Mycobacterium smegmatis).